The chain runs to 1503 residues: DNA-directed RNA polymerase subunit beta' (1503 aa).

The Zn(2+) site is built by Cys60, Cys62, Cys75, and Cys78. The Mg(2+) site is built by Asp626, Asp628, and Asp630. Zn(2+) is bound by residues Cys1002, Cys1075, Cys1082, and Cys1085. A disordered region spans residues 1439-1503 (EESQQAEEAP…EEEDNDLPAF (65 aa)). Over residues 1486 to 1503 (GDNDQSDAEEEDNDLPAF) the composition is skewed to acidic residues.

It belongs to the RNA polymerase beta' chain family. The RNAP catalytic core consists of 2 alpha, 1 beta, 1 beta' and 1 omega subunit. When a sigma factor is associated with the core the holoenzyme is formed, which can initiate transcription. Requires Mg(2+) as cofactor. The cofactor is Zn(2+).

The catalysed reaction is RNA(n) + a ribonucleoside 5'-triphosphate = RNA(n+1) + diphosphate. Its function is as follows. DNA-dependent RNA polymerase catalyzes the transcription of DNA into RNA using the four ribonucleoside triphosphates as substrates. The sequence is that of DNA-directed RNA polymerase subunit beta' from Chloroflexus aurantiacus (strain ATCC 29364 / DSM 637 / Y-400-fl).